We begin with the raw amino-acid sequence, 480 residues long: Acetyl-coenzyme A carboxylase carboxyl transferase subunit beta, chloroplastic (480 aa).

Residues 25–48 (TSSLGPIENASESKDPNINDTDKN) form a disordered region. The segment covering 35 to 47 (SESKDPNINDTDK) has biased composition (basic and acidic residues). The region spanning 216–480 (LWVQCENCYG…LHTFFPLNQN (265 aa)) is the CoA carboxyltransferase N-terminal domain. Zn(2+) contacts are provided by Cys220, Cys223, Cys239, and Cys242. The segment at 220–242 (CENCYGLNYKKFFKSKMNLCEQC) adopts a C4-type zinc-finger fold.

Belongs to the AccD/PCCB family. In terms of assembly, acetyl-CoA carboxylase is a heterohexamer composed of biotin carboxyl carrier protein, biotin carboxylase and 2 subunits each of ACCase subunit alpha and ACCase plastid-coded subunit beta (accD). Zn(2+) is required as a cofactor.

The protein localises to the plastid. The protein resides in the chloroplast stroma. The catalysed reaction is N(6)-carboxybiotinyl-L-lysyl-[protein] + acetyl-CoA = N(6)-biotinyl-L-lysyl-[protein] + malonyl-CoA. Its pathway is lipid metabolism; malonyl-CoA biosynthesis; malonyl-CoA from acetyl-CoA: step 1/1. Functionally, component of the acetyl coenzyme A carboxylase (ACC) complex. Biotin carboxylase (BC) catalyzes the carboxylation of biotin on its carrier protein (BCCP) and then the CO(2) group is transferred by the transcarboxylase to acetyl-CoA to form malonyl-CoA. The protein is Acetyl-coenzyme A carboxylase carboxyl transferase subunit beta, chloroplastic of Helianthus annuus (Common sunflower).